Here is a 241-residue protein sequence, read N- to C-terminus: MFYQLNNNMTNKPTIAAIIPAAGVGSRMQHNAPKQYIKLAGKTILEHTLTKLSALAQLNTIVVALNENDPYFEQLPVIDARIVRTCGGKERADSVLNSLLFLAANPPDWVLVHDAARPLVTIDDINTLINECISADEGGILASKVKDTIKRGHIYAEQTVPRDDLWQALTPQFFKYEDLKNALQNALASGAVITDEASAIEWANKPVKLIPGRSDNIKITTPEDLDLAGFLLQKQQNENAL.

This sequence belongs to the IspD/TarI cytidylyltransferase family. IspD subfamily.

The catalysed reaction is 2-C-methyl-D-erythritol 4-phosphate + CTP + H(+) = 4-CDP-2-C-methyl-D-erythritol + diphosphate. Its pathway is isoprenoid biosynthesis; isopentenyl diphosphate biosynthesis via DXP pathway; isopentenyl diphosphate from 1-deoxy-D-xylulose 5-phosphate: step 2/6. In terms of biological role, catalyzes the formation of 4-diphosphocytidyl-2-C-methyl-D-erythritol from CTP and 2-C-methyl-D-erythritol 4-phosphate (MEP). The chain is 2-C-methyl-D-erythritol 4-phosphate cytidylyltransferase from Pseudoalteromonas translucida (strain TAC 125).